The sequence spans 425 residues: Glutamate-1-semialdehyde 2,1-aminomutase (425 aa).

The residue at position 265 (K265) is an N6-(pyridoxal phosphate)lysine.

It belongs to the class-III pyridoxal-phosphate-dependent aminotransferase family. HemL subfamily. Homodimer. The cofactor is pyridoxal 5'-phosphate.

It is found in the cytoplasm. It carries out the reaction (S)-4-amino-5-oxopentanoate = 5-aminolevulinate. It participates in porphyrin-containing compound metabolism; protoporphyrin-IX biosynthesis; 5-aminolevulinate from L-glutamyl-tRNA(Glu): step 2/2. This chain is Glutamate-1-semialdehyde 2,1-aminomutase, found in Nitrosospira multiformis (strain ATCC 25196 / NCIMB 11849 / C 71).